The following is a 307-amino-acid chain: Probable thioesterase KK1J (307 aa).

It belongs to the AMT4 thioesterase family.

It participates in secondary metabolite biosynthesis. Probable thioesterase; part of the gene cluster that mediates the biosynthesis of KK-1, a novel cyclic depsipeptide with 10 residues which is a promising active compound with high activity against many plant pathogens, especially Botrytis cinerea. Within the pathway, kk1J is not essential for the biosynthesis of KK-1, but plays a role for efficient production via correction of peptide chain synthesis by kk1B. The nonribosomal peptide synthetase (NRPS) kk1B catalyzes the elongation and cyclization of the decapeptide chain composed of 1 D-lactic acid residue (D-Lac), 1 pipecolic acid residue (Pip), 1 aspartic acid residue (Asp), 1 isoleucine residue (Ile), 1 glycine residue (Gly), 1 tyrosine residue (Tyr) and 4 valine residues (Val). The Asp, Ile and 3 Val residues are N-methylated by the 5 methyltransferase domains from the NRPS (found in modules 3, 5, 6, 7 and 9), whereas the Tyr residue is O-methylated by the cluster encoded O-methyltransferase kk1A. The thioesterase kk1J is likely to be involved in the corrective mechanism of peptide chain synthesis. The D-lactate dehydrogenase kk1H is involved in the synthesis of D-lactic acid from pyruvic acid, which is recognized by the A domain of the first kk1B module. The pyrroline-5-carboxylate reductase kk1I is involved in the synthesis of the L-pipecolic acid residue of KK-1 from delta-1-pyrroline-5-carboxylate (P5C), a metabolic intermediate of lysine. It still is unclear how kk1C and kk1D are involved in the production of KK-1. This is Probable thioesterase KK1J from Curvularia clavata.